The chain runs to 719 residues: Glutathionylspermidine synthase (719 aa).

The region spanning cysteine 54 to aspartate 200 is the Peptidase C51 domain. Arginine 350 contributes to the glutathione binding site. Arginine 350–aspartate 352 serves as a coordination point for ATP. Mg(2+)-binding residues include aspartate 352, glutamate 364, and asparagine 366. Glutathione is bound at residue serine 369. Glutamate 432 is a binding site for spermidine. Residues glutamate 433 and threonine 501 each coordinate glutathione. ATP contacts are provided by residues lysine 544, lysine 579, glycine 586, glutamine 653, and lysine 689 to threonine 691.

This sequence in the C-terminal section; belongs to the glutathionylspermidine synthase preATP-grasp family. Requires Mg(2+) as cofactor. Post-translationally, the N-terminus is blocked.

The enzyme catalyses spermidine + glutathione + ATP = glutathionylspermidine + ADP + phosphate + H(+). In terms of biological role, conjugates glutathione (gamma-Glu-Cys-Gly) and spermidine to form glutathionylspermidine in the biosynthesis trypanothione (N(1),N(8)-bis(glutathionyl)spermidine), which is involved in maintaining intracellular thiol redox and in defense against oxidants. The sequence is that of Glutathionylspermidine synthase (GSP) from Crithidia fasciculata.